Reading from the N-terminus, the 221-residue chain is Cytidylate kinase 1 (221 aa).

7–15 (GPSASGKSS) contacts ATP.

This sequence belongs to the cytidylate kinase family. Type 1 subfamily.

It localises to the cytoplasm. The enzyme catalyses CMP + ATP = CDP + ADP. The catalysed reaction is dCMP + ATP = dCDP + ADP. The protein is Cytidylate kinase 1 of Borrelia garinii subsp. bavariensis (strain ATCC BAA-2496 / DSM 23469 / PBi) (Borreliella bavariensis).